We begin with the raw amino-acid sequence, 609 residues long: Chaperone protein DnaK (609 aa).

T173 carries the phosphothreonine; by autocatalysis modification. Basic and acidic residues predominate over residues 525–542; sequence ENISDEDKKNAEEKKDAL. Disordered regions lie at residues 525–554 and 574–609; these read ENISDEDKKNAEEKKDALKTALEGEDIDDI and EQAQQAQQQGQEEQGSQDSTVEDADFKEVKDDEDKK. Positions 574–587 are enriched in low complexity; the sequence is EQAQQAQQQGQEEQ. A compositionally biased stretch (basic and acidic residues) spans 597-609; that stretch reads ADFKEVKDDEDKK.

This sequence belongs to the heat shock protein 70 family.

Its function is as follows. Acts as a chaperone. In Staphylococcus epidermidis (strain ATCC 35984 / DSM 28319 / BCRC 17069 / CCUG 31568 / BM 3577 / RP62A), this protein is Chaperone protein DnaK.